We begin with the raw amino-acid sequence, 708 residues long: Leukotoxin translocation ATP-binding protein LktB (708 aa).

The Peptidase C39 domain maps to 1–126 (MEANHQRNDL…ACYQGQLILV (126 aa)). Positions 155 to 437 (FLETLIVSIF…LAQLWQDFQQ (283 aa)) constitute an ABC transmembrane type-1 domain. 5 helical membrane passes run 159 to 179 (LIVS…FQVV), 192 to 212 (LNII…LSGL), 270 to 290 (ALTS…MWYY), 296 to 316 (LVIL…SPIL), and 389 to 409 (VMVI…LSIG). One can recognise an ABC transporter domain in the interval 469 to 704 (ISFKNIRFRY…SNGLYSYLHQ (236 aa)). 503–510 (GRSGSGKS) lines the ATP pocket.

It belongs to the ABC transporter superfamily. Protein-1 exporter (TC 3.A.1.109) family. In terms of assembly, homodimer.

It localises to the cell inner membrane. It catalyses the reaction ATP + H2O + proteinSide 1 = ADP + phosphate + proteinSide 2.. Part of the ABC transporter complex LktBD involved in leukotoxin export. Transmembrane domains (TMD) form a pore in the inner membrane and the ATP-binding domain (NBD) is responsible for energy generation. This is Leukotoxin translocation ATP-binding protein LktB (lktB) from Mannheimia haemolytica (Pasteurella haemolytica).